A 152-amino-acid chain; its full sequence is Cytochrome c-type biogenesis protein CcmE (152 aa).

The Cytoplasmic segment spans residues 1–9 (MRGLKKQRR). Residues 10–30 (IQILIVAAVALTLSSVLIGYA) form a helical; Signal-anchor for type II membrane protein membrane-spanning segment. The Periplasmic segment spans residues 31-152 (LRDGINFFRP…PDGYARDGDS (122 aa)). Heme contacts are provided by His-123 and Tyr-127.

It belongs to the CcmE/CycJ family.

It is found in the cell inner membrane. Its function is as follows. Heme chaperone required for the biogenesis of c-type cytochromes. Transiently binds heme delivered by CcmC and transfers the heme to apo-cytochromes in a process facilitated by CcmF and CcmH. The polypeptide is Cytochrome c-type biogenesis protein CcmE (Jannaschia sp. (strain CCS1)).